Reading from the N-terminus, the 581-residue chain is Arginine--tRNA ligase (581 aa).

Residues 131–141 carry the 'HIGH' region motif; the sequence is ANPTGPMHVGH.

The protein belongs to the class-I aminoacyl-tRNA synthetase family. Monomer.

It is found in the cytoplasm. It carries out the reaction tRNA(Arg) + L-arginine + ATP = L-arginyl-tRNA(Arg) + AMP + diphosphate. This is Arginine--tRNA ligase from Paracoccus denitrificans (strain Pd 1222).